The chain runs to 65 residues: UPF0337 protein PA4738 (65 aa).

Belongs to the UPF0337 (CsbD) family.

The polypeptide is UPF0337 protein PA4738 (Pseudomonas aeruginosa (strain ATCC 15692 / DSM 22644 / CIP 104116 / JCM 14847 / LMG 12228 / 1C / PRS 101 / PAO1)).